Here is a 233-residue protein sequence, read N- to C-terminus: 2-amino-5-formylamino-6-ribosylaminopyrimidin-4(3H)-one 5'-monophosphate deformylase (233 aa).

Glutamate 33, histidine 35, aspartate 44, and histidine 114 together coordinate Fe cation.

Belongs to the creatininase superfamily. FAPy deformylase family. Homodimer. Fe(2+) is required as a cofactor. It depends on Zn(2+) as a cofactor.

The enzyme catalyses 2-amino-5-formylamino-6-(5-phospho-D-ribosylamino)pyrimidin-4(3H)-one + H2O = 2,5-diamino-6-(1-D-ribosylamino)pyrimidin-4(3H)-one 5'-phosphate + formate + H(+). It functions in the pathway cofactor biosynthesis; coenzyme F420 biosynthesis. The protein operates within cofactor biosynthesis; riboflavin biosynthesis. Catalyzes the hydrolysis of the formamide of 2-amino-5-formylamino-6-ribosylamino-4(3H)-pyrimidinone 5'-monophosphate (FAPy) to form 2,5-diamino-6-ribosylamino-4(3H)-pyrimidinone 5'-phosphate (APy). This chain is 2-amino-5-formylamino-6-ribosylaminopyrimidin-4(3H)-one 5'-monophosphate deformylase, found in Methanosphaera stadtmanae (strain ATCC 43021 / DSM 3091 / JCM 11832 / MCB-3).